The following is a 425-amino-acid chain: L-lysine 2,3-aminomutase (425 aa).

Residues 113–325 (HRYPDRVLLL…GLRGHTSGYA (213 aa)) enclose the Radical SAM core domain. The [4Fe-4S] cluster site is built by cysteine 127, cysteine 131, and cysteine 134. An N6-(pyridoxal phosphate)lysine modification is found at lysine 339.

It belongs to the radical SAM superfamily. KamA family. In terms of assembly, homotetramer. Requires [4Fe-4S] cluster as cofactor. It depends on pyridoxal 5'-phosphate as a cofactor.

It catalyses the reaction L-lysine = (3S)-3,6-diaminohexanoate. It functions in the pathway amino-acid degradation; L-lysine degradation via acetate pathway. In terms of biological role, catalyzes the interconversion of L-alpha-lysine and L-beta-lysine. In Fusobacterium nucleatum subsp. nucleatum (strain ATCC 25586 / DSM 15643 / BCRC 10681 / CIP 101130 / JCM 8532 / KCTC 2640 / LMG 13131 / VPI 4355), this protein is L-lysine 2,3-aminomutase.